Consider the following 88-residue polypeptide: ATP synthase subunit 9, mitochondrial (88 aa).

A run of 2 helical transmembrane segments spans residues 8–28 (IGAGAATIASAGAAIGIGNVF) and 45–72 (LFGYAILGFALSELIALFALMMAFLILF).

Belongs to the ATPase C chain family. As to quaternary structure, F-type ATPases have 2 components, CF(1) - the catalytic core - and CF(0) - the membrane proton channel. CF(1) has five subunits: alpha(3), beta(3), gamma(1), delta(1), epsilon(1). CF(0) has three main subunits: a, b and c.

The protein localises to the mitochondrion membrane. The catalysed reaction is ATP + H2O + 4 H(+)(in) = ADP + phosphate + 5 H(+)(out). Functionally, this protein is one of the chains of the nonenzymatic membrane component (F0) of mitochondrial ATPase. This chain is ATP synthase subunit 9, mitochondrial (ATP9), found in Beta vulgaris (Sugar beet).